A 290-amino-acid chain; its full sequence is Serpentine receptor class U-26 (290 aa).

Transmembrane regions (helical) follow at residues 31 to 51, 70 to 90, 112 to 134, 158 to 178, 185 to 205, 213 to 233, and 262 to 282; these read LPML…IIIL, LLSA…ADFL, FITI…PFLV, FSIP…FPAI, AYPF…FGLV, NTLF…LLLI, and MIFS…LHIV.

Belongs to the nematode receptor-like protein sru family.

The protein localises to the membrane. In Caenorhabditis elegans, this protein is Serpentine receptor class U-26 (sru-26).